The primary structure comprises 362 residues: MNAVTAGAHALRHDWTLAEVQALFALPFNDLLFQAQTVHRAHFDPNEVQVSTLLSIKTGACPEDCKYCPQSARYHTGLEAERLMEVEKVLERAREAKANGSSRFCMGAAWRNPKEKDMPYILRMIEEVRGLGMETCMTLGMLTADQAARLGAAGLDYYNHNLDTSPEFYGDIITTRTYQDRLDTLAYVRGAGMKVCSGGIVGMGEQAKDRAGLLMALANLPRHPESVPINMLVKVKGTPLENQENLDPFEFIRTIAVARIMMPASHVRLSAGREKMNEQMQAMCFMAGANSIFYGCKLLTTPNPDENSDMQLFKRLGIRPAQRAQKPDQVQEEELLAEVSRQSEPAEMFYDATRPRAGAARS.

The Radical SAM core domain occupies 46–273 (NEVQVSTLLS…ASHVRLSAGR (228 aa)). [4Fe-4S] cluster contacts are provided by Cys61, Cys65, and Cys68. 4 residues coordinate [2Fe-2S] cluster: Cys105, Cys136, Cys196, and Arg268. The segment at 320–339 (PAQRAQKPDQVQEEELLAEV) is disordered.

This sequence belongs to the radical SAM superfamily. Biotin synthase family. As to quaternary structure, homodimer. [4Fe-4S] cluster is required as a cofactor. The cofactor is [2Fe-2S] cluster.

The enzyme catalyses (4R,5S)-dethiobiotin + (sulfur carrier)-SH + 2 reduced [2Fe-2S]-[ferredoxin] + 2 S-adenosyl-L-methionine = (sulfur carrier)-H + biotin + 2 5'-deoxyadenosine + 2 L-methionine + 2 oxidized [2Fe-2S]-[ferredoxin]. It functions in the pathway cofactor biosynthesis; biotin biosynthesis; biotin from 7,8-diaminononanoate: step 2/2. In terms of biological role, catalyzes the conversion of dethiobiotin (DTB) to biotin by the insertion of a sulfur atom into dethiobiotin via a radical-based mechanism. The chain is Biotin synthase from Aeromonas hydrophila subsp. hydrophila (strain ATCC 7966 / DSM 30187 / BCRC 13018 / CCUG 14551 / JCM 1027 / KCTC 2358 / NCIMB 9240 / NCTC 8049).